Reading from the N-terminus, the 355-residue chain is Isopentenyl-diphosphate delta-isomerase (355 aa).

Position 6-7 (6-7) interacts with substrate; the sequence is RK. Residues 62-64, Ser-93, and Asn-122 contribute to the FMN site; that span reads AMT. Gln-152 is a binding site for substrate. Glu-153 contacts Mg(2+). FMN is bound by residues Lys-184, Thr-214, 258–259, and 280–281; these read GG and AG.

Belongs to the IPP isomerase type 2 family. As to quaternary structure, homooctamer. Dimer of tetramers. It depends on FMN as a cofactor. The cofactor is NADPH. Mg(2+) is required as a cofactor.

The protein resides in the cytoplasm. It catalyses the reaction isopentenyl diphosphate = dimethylallyl diphosphate. Functionally, involved in the biosynthesis of isoprenoids. Catalyzes the 1,3-allylic rearrangement of the homoallylic substrate isopentenyl (IPP) to its allylic isomer, dimethylallyl diphosphate (DMAPP). The chain is Isopentenyl-diphosphate delta-isomerase from Bacillus pumilus (strain SAFR-032).